A 494-amino-acid polypeptide reads, in one-letter code: O-acetyltransferase ptmV (494 aa).

The tract at residues 181 to 203 is disordered; that stretch reads ESQQDSREKLRHSGGPPDPRFDH.

The protein belongs to the fumigaclavine B O-acetyltransferase family. Monomer.

It functions in the pathway secondary metabolite biosynthesis. Its function is as follows. O-acetyltransferase; part of the gene cluster that mediates the biosynthesis of the indole diterpenes penitrems. The geranylgeranyl diphosphate (GGPP) synthase ptmG catalyzes the first step in penitrem biosynthesis via conversion of farnesyl pyrophosphate and isopentyl pyrophosphate into geranylgeranyl pyrophosphate (GGPP). Condensation of indole-3-glycerol phosphate with GGPP by the prenyl transferase ptmC then forms 3-geranylgeranylindole (3-GGI). Epoxidation by the FAD-dependent monooxygenase ptmM leads to a epoxidized-GGI that is substrate of the terpene cyclase ptmB for cyclization to yield paspaline. Paspaline is subsequently converted to 13-desoxypaxilline by the cytochrome P450 monooxygenase ptmP, the latter being then converted to paxilline by the cytochrome P450 monooxygenase ptmQ. Paxilline is converted to beta-paxitriol via C-10 ketoreduction by the short-chain dehydrogenase ptmH which can be monoprenylated at the C-20 by the indole diterpene prenyltransferase ptmD. A two-step elimination (acetylation and elimination) process performed by the O-acetyltransferase ptmV and ptmI leads to the production of the prenylated form of penijanthine. The FAD-linked oxidoreductase ptmO then converts the prenylated form of penijanthine into PC-M5 which is in turn transformed into PC-M4 by the aromatic dimethylallyltransferase ptmE. Five sequential oxidative transformations performed by the cytochrome P450 monooxygenases ptmK, ptmU, ptmL, ptmN and ptmJ yield the various penitrem compounds. PtmK, ptmU and ptmM are involved in the formation of the key bicyclic ring of penitrem C via the formation of the intermediates secopenitrem D and penitrem D. PtmL catalyzes the epoxidation of penitrem D and C to yield penitrem B and F, respectively. PtmJ catalyzes the last benzylic hydroxylation to convert penitrem B to prenitrem E and penitrem F to penitrem A. This Penicillium ochrochloron protein is O-acetyltransferase ptmV.